A 260-amino-acid chain; its full sequence is Indole-3-glycerol phosphate synthase (260 aa).

Belongs to the TrpC family.

The catalysed reaction is 1-(2-carboxyphenylamino)-1-deoxy-D-ribulose 5-phosphate + H(+) = (1S,2R)-1-C-(indol-3-yl)glycerol 3-phosphate + CO2 + H2O. The protein operates within amino-acid biosynthesis; L-tryptophan biosynthesis; L-tryptophan from chorismate: step 4/5. The sequence is that of Indole-3-glycerol phosphate synthase from Staphylococcus aureus (strain MRSA252).